Here is a 335-residue protein sequence, read N- to C-terminus: MAKRYLLDFEKPLVELEKQIEQIKELARDSEVDVSQQLLQLETLAARRREEIFKSLTPAQKIQVARHPQRPSTLDFVQMFCDDWIELHGDRNGGDDMALIGGIGSINNRPVLMLGHQKGRDTKENVVRNFGMAKPGGYRKALRLMQHANRFSLPILTFIDTPGAYAGLKAEEHGQGEAIARNLREMFGLKVPIVATVIGEGGSGGALGIGVADRLLMFEHSVYTVASPEACASILWRDAAKAPEAASALKITGKDLLKLGIIDEVLPEPSGGNNWAPLDAGNTLKEAIEKHLNALLKMPEDELIEERYKKFRVLGKFIEANNIEEIYSEIPQKTE.

Residues 40 to 294 (QLETLAARRR…KEAIEKHLNA (255 aa)) enclose the CoA carboxyltransferase C-terminal domain.

Belongs to the AccA family. Acetyl-CoA carboxylase is a heterohexamer composed of biotin carboxyl carrier protein (AccB), biotin carboxylase (AccC) and two subunits each of ACCase subunit alpha (AccA) and ACCase subunit beta (AccD).

The protein localises to the cytoplasm. It catalyses the reaction N(6)-carboxybiotinyl-L-lysyl-[protein] + acetyl-CoA = N(6)-biotinyl-L-lysyl-[protein] + malonyl-CoA. The protein operates within lipid metabolism; malonyl-CoA biosynthesis; malonyl-CoA from acetyl-CoA: step 1/1. Functionally, component of the acetyl coenzyme A carboxylase (ACC) complex. First, biotin carboxylase catalyzes the carboxylation of biotin on its carrier protein (BCCP) and then the CO(2) group is transferred by the carboxyltransferase to acetyl-CoA to form malonyl-CoA. This chain is Acetyl-coenzyme A carboxylase carboxyl transferase subunit alpha, found in Prochlorococcus marinus (strain MIT 9301).